The following is a 315-amino-acid chain: Small ribosomal subunit biogenesis GTPase RsgA (315 aa).

In terms of domain architecture, CP-type G spans 80 to 241; that stretch reads LSKQTHIIAS…IIDTPGIKGF (162 aa). GTP is bound by residues 129–132 and 183–191; these read NKVD and GHSGTGKST. Cysteine 265, cysteine 270, histidine 272, and cysteine 278 together coordinate Zn(2+).

This sequence belongs to the TRAFAC class YlqF/YawG GTPase family. RsgA subfamily. Monomer. Associates with 30S ribosomal subunit, binds 16S rRNA. It depends on Zn(2+) as a cofactor.

The protein localises to the cytoplasm. Its function is as follows. One of several proteins that assist in the late maturation steps of the functional core of the 30S ribosomal subunit. Helps release RbfA from mature subunits. May play a role in the assembly of ribosomal proteins into the subunit. Circularly permuted GTPase that catalyzes slow GTP hydrolysis, GTPase activity is stimulated by the 30S ribosomal subunit. The chain is Small ribosomal subunit biogenesis GTPase RsgA from Christiangramia forsetii (strain DSM 17595 / CGMCC 1.15422 / KT0803) (Gramella forsetii).